The chain runs to 588 residues: MEVGKKLELSITADEVEVLSKAIKNEKFQEMLSNYFQEISSPENVKTYQEEVTLLEQKRGNSIEFIHPSPFRALETSVDGKQRCFINICACDKVGKPESKTVRTVQRFGEKWSLPHLLQPGRQNCERKGNISTIYDVCFHPETLHLADKSEKFMDMVKEVAIQGIQKAFKVLLDKSNLKEMDIKYKGVPQSCVIRKPIPGYEAKEPPEERDLSPSTSHLPENSIDVPSKLLQKQPEEPIKPIYAIKYRSVIDLQDFRVSRESARSLRPKEIVITIDLPLLPTVHGMVLEVEEKRLLLESENPSYRLELHLSYPVDENNGKAKFNKHQRQLTVTLPVQPPLEAPQLPGGSPNPTSDPQNENQTRVEERVEEMAEKGGEQHQRGNDNGAAQGRRQVLEDQNGEKEGKKIQKRNERPEHEVKNETLRKKHDEKFELQDVQQENKGNCSNTKEVKCCRRTKDSLDSLIPTTAASPDGQKKHILTQETEKPKGSVEIPTSSQEYLKVPVTSAATAANVNASDETSKRKPTEEQLEDADEDVLPAEQRFQEPEEINVPAAGTLRQNNAAGNEKINDPHTSAGFVLQNKLMYELD.

Disordered stretches follow at residues 199-223 (PGYE…PENS), 338-498 (PPLE…SSQE), and 510-535 (AANV…ADED). Over residues 202–212 (EAKEPPEERDL) the composition is skewed to basic and acidic residues. Over residues 350-361 (PNPTSDPQNENQ) the composition is skewed to polar residues. Composition is skewed to basic and acidic residues over residues 362–382 (TRVE…HQRG) and 393–433 (QVLE…KFEL). Residues 435–447 (DVQQENKGNCSNT) are compositionally biased toward polar residues. The segment covering 448–460 (KEVKCCRRTKDSL) has biased composition (basic and acidic residues).

Belongs to the PIH1 family. Kintoun subfamily.

It is found in the cytoplasm. The protein resides in the dynein axonemal particle. In terms of biological role, required for cytoplasmic pre-assembly of axonemal dyneins, thereby playing a central role in motility in cilia and flagella. Involved in pre-assembly of dynein arm complexes in the cytoplasm before intraflagellar transport loads them for the ciliary compartment. This chain is Protein kintoun, found in Oryzias latipes (Japanese rice fish).